The primary structure comprises 249 residues: Probable transcriptional regulatory protein Tfu_2096 (249 aa).

The protein belongs to the TACO1 family.

Its subcellular location is the cytoplasm. This chain is Probable transcriptional regulatory protein Tfu_2096, found in Thermobifida fusca (strain YX).